Here is a 502-residue protein sequence, read N- to C-terminus: UPF0371 protein CLH_2534 (502 aa).

Belongs to the UPF0371 family.

The sequence is that of UPF0371 protein CLH_2534 from Clostridium botulinum (strain Alaska E43 / Type E3).